Reading from the N-terminus, the 301-residue chain is Homeobox protein Hox-D13 (301 aa).

Disordered stretches follow at residues 1–20 and 55–75; these read MDGL…TPGQ and GERS…PGSG. A compositionally biased stretch (gly residues) spans 8–18; that stretch reads SSGGGGGGGTP. The segment at residues 234 to 293 is a DNA-binding region (homeobox); that stretch reads GRKKRVPYTKLQLKELENEYAINKFINKDKRRRISAATNLSERQVTIWFQNRRVKDKKIV.

Belongs to the Abd-B homeobox family.

Its subcellular location is the nucleus. In terms of biological role, sequence-specific transcription factor that binds gene promoters and activates their transcription. Part of a developmental regulatory system that provides cells with specific positional identities on the anterior-posterior axis. This Gallus gallus (Chicken) protein is Homeobox protein Hox-D13 (HOXD13).